The following is a 986-amino-acid chain: Ephrin type-B receptor 2 (986 aa).

The N-terminal stretch at 1-18 (MAVRRLGAALLLLPLLAA) is a signal peptide. Residues 19–543 (VEETLMDSTT…QTSIKEKLPL (525 aa)) are Extracellular-facing. One can recognise an Eph LBD domain in the interval 20 to 202 (EETLMDSTTA…FYRKCPRIIQ (183 aa)). Disulfide bonds link cysteine 62–cysteine 184 and cysteine 97–cysteine 107. 4 N-linked (GlcNAc...) asparagine glycosylation sites follow: asparagine 265, asparagine 336, asparagine 428, and asparagine 482. Fibronectin type-III domains are found at residues 324–434 (IPSA…TNQA) and 435–530 (APSA…TMTE). A helical membrane pass occupies residues 544–564 (IVGSSAAGLVFLIAVVVIAIV). Residues 565–986 (CNRRGFERAD…QMNQIQSVEV (422 aa)) are Cytoplasmic-facing. The Protein kinase domain maps to 621–884 (VKIEQVIGAG…QIVNTLDKMI (264 aa)). Residues 627–635 (IGAGEFGEV) and lysine 653 each bind ATP. Catalysis depends on aspartate 746, which acts as the Proton acceptor. A Glycyl lysine isopeptide (Lys-Gly) (interchain with G-Cter in ubiquitin) cross-link involves residue lysine 891. An SAM domain is found at 913 to 977 (TSFNTVDEWL…LNSIQVMRAQ (65 aa)). The PDZ-binding signature appears at 984 to 986 (VEV).

This sequence belongs to the protein kinase superfamily. Tyr protein kinase family. Ephrin receptor subfamily. As to quaternary structure, heterotetramer upon binding of the ligand. The heterotetramer is composed of an ephrin dimer and a receptor dimer. Interacts (via PDZ-binding motif) with GRIP1 and PICK1 (via PDZ domain). Interacts with ARHGEF15; mediates ARHGEF15 phosphorylation, ubiquitination and degradation by the proteasome. Interacts with AQP1; involved in endolymph production in the inner ear. Interacts with EFNA5. Interacts with SPSB1. Interacts with SPSB4. Interacts with SH2D3C. Autophosphorylated; ligand binding stimulates autophosphorylation on tyrosine residues. Post-translationally, ligand binding induces cleavage by matrix metalloproteinases (MMPs) such as MMP7/MMP9, producing an EphB2/N-terminal fragment (NTF) and a C-terminal long fragment (EphB2-LF). EphB2-LF is further cleaved by MMPs, producing EphB2/CTF1 which is further cleaved by the PS1/gamma-secretase producing EphB2/CTF2. In terms of processing, polyubiquitinated; ligand binding stimulates ubiquitination. Ubiquitinated by RNF186 at Lys-891, mainly through 'Lys-27'-linked polyubiquitin chains. Ubiquitinated by CRL2(KLHDC2) E3 ligase complex. In terms of tissue distribution, expressed in the epithelial dark cells of the inner ear. Expressed in the region of the proximal tubules of the kidney nephron. Expressed in myogenic progenitor cells.

It is found in the cell membrane. It localises to the cell projection. The protein localises to the axon. Its subcellular location is the dendrite. It carries out the reaction L-tyrosyl-[protein] + ATP = O-phospho-L-tyrosyl-[protein] + ADP + H(+). Receptor tyrosine kinase which binds promiscuously transmembrane ephrin-B family ligands residing on adjacent cells, leading to contact-dependent bidirectional signaling into neighboring cells. The signaling pathway downstream of the receptor is referred to as forward signaling while the signaling pathway downstream of the ephrin ligand is referred to as reverse signaling. Functions in axon guidance during development. Involved in the guidance of commissural axons, that form a major interhemispheric connection between the 2 temporal lobes of the cerebral cortex. Also involved in guidance of contralateral inner ear efferent growth cones at the midline and of retinal ganglion cell axons to the optic disk. In addition to axon guidance, also regulates dendritic spines development and maturation and stimulates the formation of excitatory synapses. Upon activation by EFNB1, abolishes the ARHGEF15-mediated negative regulation on excitatory synapse formation. Controls other aspects of development including angiogenesis, palate development and in inner ear development through regulation of endolymph production. Forward and reverse signaling through the EFNB2/EPHB2 complex regulate movement and adhesion of cells that tubularize the urethra and septate the cloaca. May function as a tumor suppressor. May be involved in the regulation of platelet activation and blood coagulation. The protein is Ephrin type-B receptor 2 of Mus musculus (Mouse).